We begin with the raw amino-acid sequence, 366 residues long: Ubiquitin carboxyl-terminal hydrolase 46 (366 aa).

A USP domain is found at 35-365 (FGLVNFGNTC…SGYILFYQSR (331 aa)). Cysteine 44 serves as the catalytic Nucleophile. Zn(2+) contacts are provided by cysteine 182, cysteine 185, cysteine 229, and cysteine 232. Histidine 313 serves as the catalytic Proton acceptor.

It belongs to the peptidase C19 family. USP12/USP46 subfamily. In terms of assembly, interacts with WDR48. Interacts with WDR20. Interacts with DMWD. Component of the USP46/WDR20/WDR48 deubiquitinating complex. Detected in lung and spleen, and at lower levels in brain, kidney, testis and liver.

It is found in the cytoplasm. It carries out the reaction Thiol-dependent hydrolysis of ester, thioester, amide, peptide and isopeptide bonds formed by the C-terminal Gly of ubiquitin (a 76-residue protein attached to proteins as an intracellular targeting signal).. Functionally, deubiquitinating enzyme that plays a role in behavior, possibly by regulating GABA action. May act by mediating the deubiquitination of GAD1/GAD67. Has almost no deubiquitinating activity by itself and requires the interaction with WDR48 to have a high activity. Not involved in deubiquitination of monoubiquitinated FANCD2. This Rattus norvegicus (Rat) protein is Ubiquitin carboxyl-terminal hydrolase 46.